A 103-amino-acid chain; its full sequence is Small ribosomal subunit protein uS10 (103 aa).

Belongs to the universal ribosomal protein uS10 family. As to quaternary structure, part of the 30S ribosomal subunit.

In terms of biological role, involved in the binding of tRNA to the ribosomes. The polypeptide is Small ribosomal subunit protein uS10 (Ralstonia pickettii (strain 12J)).